A 322-amino-acid chain; its full sequence is Ornithine carbamoyltransferase (322 aa).

Residues 67–70, glutamine 94, arginine 118, and 145–148 each bind carbamoyl phosphate; these read STRT and HPCQ. L-ornithine-binding positions include asparagine 176, aspartate 240, and 244 to 245; that span reads SM. Carbamoyl phosphate contacts are provided by residues 280 to 281 and arginine 308; that span reads CL.

The protein belongs to the aspartate/ornithine carbamoyltransferase superfamily. OTCase family.

The protein resides in the cytoplasm. The catalysed reaction is carbamoyl phosphate + L-ornithine = L-citrulline + phosphate + H(+). The protein operates within amino-acid biosynthesis; L-arginine biosynthesis; L-arginine from L-ornithine and carbamoyl phosphate: step 1/3. Reversibly catalyzes the transfer of the carbamoyl group from carbamoyl phosphate (CP) to the N(epsilon) atom of ornithine (ORN) to produce L-citrulline. The sequence is that of Ornithine carbamoyltransferase from Oceanobacillus iheyensis (strain DSM 14371 / CIP 107618 / JCM 11309 / KCTC 3954 / HTE831).